The primary structure comprises 220 residues: Putative phosphatase YhcW (220 aa).

The active-site Nucleophile is the D8. 3 residues coordinate a divalent metal cation: D8, D10, and D166. The active-site Proton donor is D10.

Belongs to the HAD-like hydrolase superfamily. CbbY/CbbZ/Gph/YieH family. Requires a divalent metal cation as cofactor.

The chain is Putative phosphatase YhcW (yhcW) from Bacillus subtilis (strain 168).